We begin with the raw amino-acid sequence, 180 residues long: Large ribosomal subunit protein uL6 (180 aa).

It belongs to the universal ribosomal protein uL6 family. In terms of assembly, part of the 50S ribosomal subunit.

Its function is as follows. This protein binds to the 23S rRNA, and is important in its secondary structure. It is located near the subunit interface in the base of the L7/L12 stalk, and near the tRNA binding site of the peptidyltransferase center. This chain is Large ribosomal subunit protein uL6, found in Borreliella burgdorferi (strain ATCC 35210 / DSM 4680 / CIP 102532 / B31) (Borrelia burgdorferi).